A 388-amino-acid chain; its full sequence is Succinate--CoA ligase [ADP-forming] subunit beta (388 aa).

One can recognise an ATP-grasp domain in the interval 9 to 244 (KQLFAEYGLP…PSQEDSREAE (236 aa)). Residues lysine 46, 53–55 (GRG), glutamate 99, threonine 102, and glutamate 107 contribute to the ATP site. Residues asparagine 199 and aspartate 213 each contribute to the Mg(2+) site. Residues asparagine 264 and 321–323 (GIV) contribute to the substrate site.

It belongs to the succinate/malate CoA ligase beta subunit family. In terms of assembly, heterotetramer of two alpha and two beta subunits. Requires Mg(2+) as cofactor.

The enzyme catalyses succinate + ATP + CoA = succinyl-CoA + ADP + phosphate. The catalysed reaction is GTP + succinate + CoA = succinyl-CoA + GDP + phosphate. The protein operates within carbohydrate metabolism; tricarboxylic acid cycle; succinate from succinyl-CoA (ligase route): step 1/1. Functionally, succinyl-CoA synthetase functions in the citric acid cycle (TCA), coupling the hydrolysis of succinyl-CoA to the synthesis of either ATP or GTP and thus represents the only step of substrate-level phosphorylation in the TCA. The beta subunit provides nucleotide specificity of the enzyme and binds the substrate succinate, while the binding sites for coenzyme A and phosphate are found in the alpha subunit. This chain is Succinate--CoA ligase [ADP-forming] subunit beta, found in Marinobacter nauticus (strain ATCC 700491 / DSM 11845 / VT8) (Marinobacter aquaeolei).